The sequence spans 288 residues: Damage-control phosphatase AF_1104 (288 aa).

The short motif at cysteine 7–cysteine 10 is the Subfamily I CxxC motif element. 3 residues coordinate Mn(2+): aspartate 160, asparagine 161, and aspartate 194. The Subfamily I GNFE-like motif signature appears at alanine 247–glutamate 250. The short motif at lysine 267 to cysteine 268 is the Subfamily I KC motif element.

Belongs to the damage-control phosphatase family. Nucleotides phosphatase I subfamily. It depends on [2Fe-2S] cluster as a cofactor. Mn(2+) serves as cofactor. Requires Ni(2+) as cofactor.

Its function is as follows. Metal-dependent phosphatase with probable damage-control functions. Could hydrolyze oxidatively damaged purine nucleotides or their biosynthetic intermediates. This chain is Damage-control phosphatase AF_1104, found in Archaeoglobus fulgidus (strain ATCC 49558 / DSM 4304 / JCM 9628 / NBRC 100126 / VC-16).